The following is a 284-amino-acid chain: Bifunctional protein FolD (284 aa).

Residues Gly165 to Ser167, Ser190, and Ile231 each bind NADP(+).

The protein belongs to the tetrahydrofolate dehydrogenase/cyclohydrolase family. Homodimer.

It carries out the reaction (6R)-5,10-methylene-5,6,7,8-tetrahydrofolate + NADP(+) = (6R)-5,10-methenyltetrahydrofolate + NADPH. It catalyses the reaction (6R)-5,10-methenyltetrahydrofolate + H2O = (6R)-10-formyltetrahydrofolate + H(+). It participates in one-carbon metabolism; tetrahydrofolate interconversion. In terms of biological role, catalyzes the oxidation of 5,10-methylenetetrahydrofolate to 5,10-methenyltetrahydrofolate and then the hydrolysis of 5,10-methenyltetrahydrofolate to 10-formyltetrahydrofolate. The polypeptide is Bifunctional protein FolD (Polynucleobacter necessarius subsp. necessarius (strain STIR1)).